A 292-amino-acid chain; its full sequence is Probable endonuclease 4 (292 aa).

H71, H111, E148, D182, H185, H217, D230, H232, and E262 together coordinate Zn(2+).

This sequence belongs to the AP endonuclease 2 family. It depends on Zn(2+) as a cofactor.

The enzyme catalyses Endonucleolytic cleavage to 5'-phosphooligonucleotide end-products.. In terms of biological role, endonuclease IV plays a role in DNA repair. It cleaves phosphodiester bonds at apurinic or apyrimidinic (AP) sites, generating a 3'-hydroxyl group and a 5'-terminal sugar phosphate. This chain is Probable endonuclease 4, found in Aster yellows witches'-broom phytoplasma (strain AYWB).